Reading from the N-terminus, the 199-residue chain is Superoxide dismutase [Mn] (199 aa).

His-27, His-76, Asp-160, and His-164 together coordinate Mn(2+).

This sequence belongs to the iron/manganese superoxide dismutase family. It depends on Mn(2+) as a cofactor.

It carries out the reaction 2 superoxide + 2 H(+) = H2O2 + O2. Functionally, destroys superoxide anion radicals which are normally produced within the cells and which are toxic to biological systems. The protein is Superoxide dismutase [Mn] (sodA) of Corynebacterium diphtheriae (strain ATCC 700971 / NCTC 13129 / Biotype gravis).